The sequence spans 1588 residues: Pentafunctional AROM polypeptide (1588 aa).

The interval 1 to 392 is 3-dehydroquinate synthase; it reads MVQLAKVPIL…YGDSAQFVSD (392 aa). NAD(+)-binding positions include 43-45, 78-81, 109-111, and D114; these read DTN, ETSK, and GGV. 7-phospho-2-dehydro-3-deoxy-D-arabino-heptonate is bound at residue R125. NAD(+) is bound at residue 134-135; it reads TS. D141 and K147 together coordinate 7-phospho-2-dehydro-3-deoxy-D-arabino-heptonate. K156 contacts NAD(+). A 7-phospho-2-dehydro-3-deoxy-D-arabino-heptonate-binding site is contributed by N157. NAD(+) contacts are provided by residues 174–177 and N185; that span reads WLET. E189 contacts Zn(2+). 7-phospho-2-dehydro-3-deoxy-D-arabino-heptonate-binding positions include 189 to 192 and K258; that span reads EVIK. The Proton acceptor; for 3-dehydroquinate synthase activity role is filled by E268. 7-phospho-2-dehydro-3-deoxy-D-arabino-heptonate contacts are provided by residues 272–276 and H279; that span reads RNLLN. Residue H279 participates in Zn(2+) binding. H283 serves as the catalytic Proton acceptor; for 3-dehydroquinate synthase activity. 7-phospho-2-dehydro-3-deoxy-D-arabino-heptonate contacts are provided by H295 and K364. Position 295 (H295) interacts with Zn(2+). The segment at 405-871 is EPSP synthase; the sequence is VYPFKDIPAD…WDVLHSELGA (467 aa). The active-site For EPSP synthase activity is the C853. The tract at residues 890 to 1080 is shikimate kinase; the sequence is SVVIIGMRAA…IPSGRSAFVC (191 aa). 895–902 contacts ATP; that stretch reads GMRAAGKT. The 3-dehydroquinase stretch occupies residues 1081 to 1293; the sequence is LTFDDLTEQT…AAPGQLTVAQ (213 aa). The Proton acceptor; for 3-dehydroquinate dehydratase activity role is filled by H1198. K1227 functions as the Schiff-base intermediate with substrate; for 3-dehydroquinate dehydratase activity in the catalytic mechanism. The interval 1306-1588 is shikimate dehydrogenase; it reads PKELFVVGKP…KAIFDAVTKE (283 aa).

This sequence in the N-terminal section; belongs to the sugar phosphate cyclases superfamily. Dehydroquinate synthase family. It in the 2nd section; belongs to the EPSP synthase family. The protein in the 3rd section; belongs to the shikimate kinase family. In the 4th section; belongs to the type-I 3-dehydroquinase family. This sequence in the C-terminal section; belongs to the shikimate dehydrogenase family. In terms of assembly, homodimer. Zn(2+) serves as cofactor.

It localises to the cytoplasm. The enzyme catalyses 7-phospho-2-dehydro-3-deoxy-D-arabino-heptonate = 3-dehydroquinate + phosphate. The catalysed reaction is 3-dehydroquinate = 3-dehydroshikimate + H2O. It carries out the reaction shikimate + NADP(+) = 3-dehydroshikimate + NADPH + H(+). It catalyses the reaction shikimate + ATP = 3-phosphoshikimate + ADP + H(+). The enzyme catalyses 3-phosphoshikimate + phosphoenolpyruvate = 5-O-(1-carboxyvinyl)-3-phosphoshikimate + phosphate. The protein operates within metabolic intermediate biosynthesis; chorismate biosynthesis; chorismate from D-erythrose 4-phosphate and phosphoenolpyruvate: step 2/7. It participates in metabolic intermediate biosynthesis; chorismate biosynthesis; chorismate from D-erythrose 4-phosphate and phosphoenolpyruvate: step 3/7. It functions in the pathway metabolic intermediate biosynthesis; chorismate biosynthesis; chorismate from D-erythrose 4-phosphate and phosphoenolpyruvate: step 4/7. Its pathway is metabolic intermediate biosynthesis; chorismate biosynthesis; chorismate from D-erythrose 4-phosphate and phosphoenolpyruvate: step 5/7. The protein operates within metabolic intermediate biosynthesis; chorismate biosynthesis; chorismate from D-erythrose 4-phosphate and phosphoenolpyruvate: step 6/7. Its function is as follows. The AROM polypeptide catalyzes 5 consecutive enzymatic reactions in prechorismate polyaromatic amino acid biosynthesis. The polypeptide is Pentafunctional AROM polypeptide (Saccharomyces cerevisiae (strain YJM789) (Baker's yeast)).